Consider the following 297-residue polypeptide: Acetylglutamate kinase (297 aa).

Residues G68 to G69, R90, and N195 each bind substrate.

It belongs to the acetylglutamate kinase family. ArgB subfamily.

It is found in the cytoplasm. The catalysed reaction is N-acetyl-L-glutamate + ATP = N-acetyl-L-glutamyl 5-phosphate + ADP. Its pathway is amino-acid biosynthesis; L-arginine biosynthesis; N(2)-acetyl-L-ornithine from L-glutamate: step 2/4. Functionally, catalyzes the ATP-dependent phosphorylation of N-acetyl-L-glutamate. The sequence is that of Acetylglutamate kinase from Chelativorans sp. (strain BNC1).